A 121-amino-acid polypeptide reads, in one-letter code: uncharacterized protein (121 aa).

The 115-residue stretch at 7–121 (IFCKIVRGEV…GGREMSWPPG (115 aa)) folds into the HIT domain. A Histidine triad motif motif is present at residues 105 to 109 (HLHLH).

This is an uncharacterized protein from Aquifex aeolicus (strain VF5).